A 417-amino-acid polypeptide reads, in one-letter code: Probable serine incorporator (417 aa).

Transmembrane regions (helical) follow at residues 25–45, 69–89, 104–124, 131–151, 180–200, 208–228, 239–259, 276–296, 339–359, and 391–411; these read VYVV…YWTF, VVYR…LVMI, GYWP…FFIP, YTWI…VLLI, CVLS…MLVF, INQF…VLSI, SGLF…YSAI, KEST…YSAF, FFHF…TNWA, and VVSS…PILL.

Belongs to the TDE1 family.

The protein resides in the endoplasmic reticulum membrane. Enhances the incorporation of serine into phosphatidylserine and sphingolipids. In Dictyostelium discoideum (Social amoeba), this protein is Probable serine incorporator (serinc).